The sequence spans 2179 residues: Probable inactive serine/threonine-protein kinase lvsG (2179 aa).

Residues Asp-100 to Ser-167 are disordered. 2 stretches are compositionally biased toward low complexity: residues Asn-106–Gly-121 and Leu-141–Ser-159. A WD 1 repeat occupies Leu-216 to Pro-256. Disordered regions lie at residues Leu-281 to Ser-300, Asp-523 to Trp-556, Asp-589 to Lys-621, Lys-778 to Phe-801, Asn-844 to Ser-959, Ala-1033 to Leu-1055, Gly-1079 to Asp-1153, Asn-1339 to Ser-1362, and Thr-1785 to Leu-1807. Residues Tyr-463–Phe-801 enclose the BEACH domain. The segment covering Asn-534–Asp-548 has biased composition (low complexity). Residues Ser-590 to Gly-602 are compositionally biased toward gly residues. Composition is skewed to low complexity over residues Gln-783–Gln-800, Asn-853–Asn-943, Ala-1033–Ala-1047, and Thr-1084–Asn-1098. Residues Leu-1021 to Ser-1049 adopt a coiled-coil conformation. The 337-residue stretch at Glu-1064 to Phe-1400 folds into the Protein kinase domain. The span at Met-1099–Ile-1122 shows a compositional bias: polar residues. Positions Gln-1123–Gln-1134 are enriched in low complexity. Residues Asn-1135–Asp-1153 are compositionally biased toward polar residues. 2 stretches are compositionally biased toward low complexity: residues Asn-1339–Asn-1360 and Thr-1785–Asn-1801. 6 WD repeats span residues Glu-1864 to Thr-1903, Gln-1906 to Val-1942, Glu-1945 to Glu-1983, Ser-2007 to Gln-2048, His-2052 to Ser-2089, and Pro-2149 to Gln-2179.

This sequence belongs to the protein kinase superfamily. Ser/Thr protein kinase family.

This is Probable inactive serine/threonine-protein kinase lvsG (lvsG) from Dictyostelium discoideum (Social amoeba).